The chain runs to 148 residues: Large ribosomal subunit protein bL9 (148 aa).

This sequence belongs to the bacterial ribosomal protein bL9 family.

Its function is as follows. Binds to the 23S rRNA. The protein is Large ribosomal subunit protein bL9 of Solibacter usitatus (strain Ellin6076).